Consider the following 157-residue polypeptide: Small ribosomal subunit protein uS7 (157 aa).

This sequence belongs to the universal ribosomal protein uS7 family. In terms of assembly, part of the 30S ribosomal subunit. Contacts proteins S9 and S11.

One of the primary rRNA binding proteins, it binds directly to 16S rRNA where it nucleates assembly of the head domain of the 30S subunit. Is located at the subunit interface close to the decoding center, probably blocks exit of the E-site tRNA. This is Small ribosomal subunit protein uS7 from Akkermansia muciniphila (strain ATCC BAA-835 / DSM 22959 / JCM 33894 / BCRC 81048 / CCUG 64013 / CIP 107961 / Muc).